The primary structure comprises 451 residues: NADH-quinone oxidoreductase subunit D (451 aa).

Belongs to the complex I 49 kDa subunit family. NDH-1 is composed of 14 different subunits. Subunits NuoB, C, D, E, F, and G constitute the peripheral sector of the complex.

It localises to the cell membrane. It carries out the reaction a quinone + NADH + 5 H(+)(in) = a quinol + NAD(+) + 4 H(+)(out). Functionally, NDH-1 shuttles electrons from NADH, via FMN and iron-sulfur (Fe-S) centers, to quinones in the respiratory chain. The immediate electron acceptor for the enzyme in this species is believed to be a menaquinone. Couples the redox reaction to proton translocation (for every two electrons transferred, four hydrogen ions are translocated across the cytoplasmic membrane), and thus conserves the redox energy in a proton gradient. This chain is NADH-quinone oxidoreductase subunit D, found in Mycolicibacterium gilvum (strain PYR-GCK) (Mycobacterium gilvum (strain PYR-GCK)).